Reading from the N-terminus, the 181-residue chain is RING-H2 finger protein ATL72 (181 aa).

Residues 34–54 (VIILAALLCALICALSLNSAL) form a helical membrane-spanning segment. The RING-type; atypical zinc-finger motif lies at 114–156 (CLICLGDFEDGEKVRVLPKCNHGFHVRCIDTWLLSRSSCPTCR).

This sequence belongs to the RING-type zinc finger family. ATL subfamily.

The protein localises to the membrane. It catalyses the reaction S-ubiquitinyl-[E2 ubiquitin-conjugating enzyme]-L-cysteine + [acceptor protein]-L-lysine = [E2 ubiquitin-conjugating enzyme]-L-cysteine + N(6)-ubiquitinyl-[acceptor protein]-L-lysine.. Its pathway is protein modification; protein ubiquitination. This is RING-H2 finger protein ATL72 (ATL72) from Arabidopsis thaliana (Mouse-ear cress).